Consider the following 284-residue polypeptide: 2-dehydro-3-deoxyphosphooctonate aldolase (284 aa).

It belongs to the KdsA family.

It localises to the cytoplasm. It carries out the reaction D-arabinose 5-phosphate + phosphoenolpyruvate + H2O = 3-deoxy-alpha-D-manno-2-octulosonate-8-phosphate + phosphate. It participates in carbohydrate biosynthesis; 3-deoxy-D-manno-octulosonate biosynthesis; 3-deoxy-D-manno-octulosonate from D-ribulose 5-phosphate: step 2/3. The protein operates within bacterial outer membrane biogenesis; lipopolysaccharide biosynthesis. The polypeptide is 2-dehydro-3-deoxyphosphooctonate aldolase (Citrobacter koseri (strain ATCC BAA-895 / CDC 4225-83 / SGSC4696)).